Here is a 471-residue protein sequence, read N- to C-terminus: Replication factor C large subunit (471 aa).

44–51 is a binding site for ATP; sequence GSPGIGKT. A compositionally biased stretch (basic and acidic residues) spans 422–431; sequence RTDAAVDHSE. The interval 422-471 is disordered; that stretch reads RTDAAVDHSEGAFAGAVREDNTDEDSAADETTDGDEDTGADSQRGLDEFF. A compositionally biased stretch (acidic residues) spans 442 to 460; the sequence is NTDEDSAADETTDGDEDTG.

It belongs to the activator 1 small subunits family. RfcL subfamily. Heteromultimer composed of small subunits (RfcS) and large subunits (RfcL).

Functionally, part of the RFC clamp loader complex which loads the PCNA sliding clamp onto DNA. This is Replication factor C large subunit from Halobacterium salinarum (strain ATCC 29341 / DSM 671 / R1).